Here is a 396-residue protein sequence, read N- to C-terminus: Elongation factor Tu (396 aa).

Positions 11–205 (KPHVNIGTIG…TVDEYIPTPE (195 aa)) constitute a tr-type G domain. The G1 stretch occupies residues 20–27 (GHVDHGKT). 20 to 27 (GHVDHGKT) is a GTP binding site. Residue Thr-27 coordinates Mg(2+). Residues 61-65 (GITIN) form a G2 region. The segment at 82-85 (DAPG) is G3. GTP-binding positions include 82 to 86 (DAPGH) and 137 to 140 (NKVD). A G4 region spans residues 137-140 (NKVD). The G5 stretch occupies residues 175–177 (SAL).

The protein belongs to the TRAFAC class translation factor GTPase superfamily. Classic translation factor GTPase family. EF-Tu/EF-1A subfamily. Monomer.

It localises to the cytoplasm. It catalyses the reaction GTP + H2O = GDP + phosphate + H(+). Functionally, GTP hydrolase that promotes the GTP-dependent binding of aminoacyl-tRNA to the A-site of ribosomes during protein biosynthesis. The chain is Elongation factor Tu from Lactobacillus johnsonii (strain CNCM I-12250 / La1 / NCC 533).